The sequence spans 358 residues: tRNA-specific 2-thiouridylase MnmA (358 aa).

ATP is bound by residues 6–13 (AMSGGVDS) and Leu32. The active-site Nucleophile is the Cys101. Cys101 and Cys193 are disulfide-bonded. Residue Gly125 coordinates ATP. Positions 143 to 145 (KDQ) are interaction with tRNA. Residue Cys193 is the Cysteine persulfide intermediate of the active site.

It belongs to the MnmA/TRMU family.

The protein localises to the cytoplasm. The catalysed reaction is S-sulfanyl-L-cysteinyl-[protein] + uridine(34) in tRNA + AH2 + ATP = 2-thiouridine(34) in tRNA + L-cysteinyl-[protein] + A + AMP + diphosphate + H(+). Functionally, catalyzes the 2-thiolation of uridine at the wobble position (U34) of tRNA, leading to the formation of s(2)U34. The chain is tRNA-specific 2-thiouridylase MnmA from Mycolicibacterium paratuberculosis (strain ATCC BAA-968 / K-10) (Mycobacterium paratuberculosis).